Consider the following 273-residue polypeptide: MNASVVLNLHLISDSTCETVAAVAKSALEHFRSIEVNEFVWSFINSCEQIDKIMSLIEHDKYNFIMYTMFDDDIRRYLKQKAEVQEIPCIPVLSRVIRELSCYLHVKKDPYVNTGMGLDDEYFTRIDAINYTIAHDDGQNLWDIDKADIIILGVSRTSKSPTSIYLAYRGYRVVNIPLVNSINLSVDLSSMKNKLIVGLTIDIDRLIEIRKTRLVSMRNQNNCQYVDYEHVLVEIKETKRICMQNGWPIIDVTQKSVEEIAATIIQYFNKMQH.

Position 153–160 (153–160 (GVSRTSKS)) interacts with ADP.

It belongs to the pyruvate, phosphate/water dikinase regulatory protein family. PDRP subfamily.

The enzyme catalyses N(tele)-phospho-L-histidyl/L-threonyl-[pyruvate, phosphate dikinase] + ADP = N(tele)-phospho-L-histidyl/O-phospho-L-threonyl-[pyruvate, phosphate dikinase] + AMP + H(+). It carries out the reaction N(tele)-phospho-L-histidyl/O-phospho-L-threonyl-[pyruvate, phosphate dikinase] + phosphate + H(+) = N(tele)-phospho-L-histidyl/L-threonyl-[pyruvate, phosphate dikinase] + diphosphate. Its function is as follows. Bifunctional serine/threonine kinase and phosphorylase involved in the regulation of the pyruvate, phosphate dikinase (PPDK) by catalyzing its phosphorylation/dephosphorylation. The chain is Putative pyruvate, phosphate dikinase regulatory protein from Ehrlichia canis (strain Jake).